Here is a 164-residue protein sequence, read N- to C-terminus: MTQIDYTRAAKYFLLADFFKGFKLGMKYFFAPKVTINYPHEKGPLSPRFRGEHALRRYPNGEERCIACKLCEAICPAQAITIDAEPREDGSRRTTRYDIDMTKCIYCGFCQEACPVDAIVEGPNFEFATETREELYYDKEKLLANGERWESAIAHNLELDAPYR.

2 4Fe-4S ferredoxin-type domains span residues L55–E85 and T95–N124. C65, C68, C71, C75, C104, C107, C110, and C114 together coordinate [4Fe-4S] cluster.

It belongs to the complex I 23 kDa subunit family. In terms of assembly, NDH-1 is composed of 14 different subunits. Subunits NuoA, H, J, K, L, M, N constitute the membrane sector of the complex. The cofactor is [4Fe-4S] cluster.

The protein resides in the cell inner membrane. It catalyses the reaction a quinone + NADH + 5 H(+)(in) = a quinol + NAD(+) + 4 H(+)(out). In terms of biological role, NDH-1 shuttles electrons from NADH, via FMN and iron-sulfur (Fe-S) centers, to quinones in the respiratory chain. The immediate electron acceptor for the enzyme in this species is believed to be ubiquinone. Couples the redox reaction to proton translocation (for every two electrons transferred, four hydrogen ions are translocated across the cytoplasmic membrane), and thus conserves the redox energy in a proton gradient. The sequence is that of NADH-quinone oxidoreductase subunit I from Jannaschia sp. (strain CCS1).